Here is a 206-residue protein sequence, read N- to C-terminus: Large ribosomal subunit protein uL4 (206 aa).

The disordered stretch occupies residues 46-89 (GNRAQKTRAEVKHSTKKPWRQKGTGRARSGMTSSPLWRKGGRAF). Basic residues predominate over residues 59-70 (STKKPWRQKGTG).

Belongs to the universal ribosomal protein uL4 family. Part of the 50S ribosomal subunit.

Its function is as follows. One of the primary rRNA binding proteins, this protein initially binds near the 5'-end of the 23S rRNA. It is important during the early stages of 50S assembly. It makes multiple contacts with different domains of the 23S rRNA in the assembled 50S subunit and ribosome. Functionally, forms part of the polypeptide exit tunnel. The protein is Large ribosomal subunit protein uL4 of Neisseria gonorrhoeae (strain NCCP11945).